The chain runs to 193 residues: dCTP deaminase (193 aa).

Residues 110-115, Asp-128, 136-138, Tyr-171, Lys-178, and Gln-182 each bind dCTP; these read RSSLAR and VLE. Glu-138 functions as the Proton donor/acceptor in the catalytic mechanism.

It belongs to the dCTP deaminase family. Homotrimer.

It carries out the reaction dCTP + H2O + H(+) = dUTP + NH4(+). It participates in pyrimidine metabolism; dUMP biosynthesis; dUMP from dCTP (dUTP route): step 1/2. Its function is as follows. Catalyzes the deamination of dCTP to dUTP. The polypeptide is dCTP deaminase (Escherichia coli (strain K12 / MC4100 / BW2952)).